The sequence spans 566 residues: Oxygen-dependent choline dehydrogenase (566 aa).

7–36 (DYIICGAGSAGNVLATRLTEDPDVTVLLLE) lines the FAD pocket. Positions 180 to 202 (NGYQQEGFGPMDRTVTPKGRRAS) are disordered. The active-site Proton acceptor is His-474.

Belongs to the GMC oxidoreductase family. Requires FAD as cofactor.

The enzyme catalyses choline + A = betaine aldehyde + AH2. It catalyses the reaction betaine aldehyde + NAD(+) + H2O = glycine betaine + NADH + 2 H(+). It functions in the pathway amine and polyamine biosynthesis; betaine biosynthesis via choline pathway; betaine aldehyde from choline (cytochrome c reductase route): step 1/1. Involved in the biosynthesis of the osmoprotectant glycine betaine. Catalyzes the oxidation of choline to betaine aldehyde and betaine aldehyde to glycine betaine at the same rate. This Burkholderia orbicola (strain MC0-3) protein is Oxygen-dependent choline dehydrogenase.